The chain runs to 879 residues: Leucine--tRNA ligase (879 aa).

A 'HIGH' region motif is present at residues Pro-46–His-56. The 'KMSKS' region signature appears at Lys-638–Ser-642. Position 641 (Lys-641) interacts with ATP.

It belongs to the class-I aminoacyl-tRNA synthetase family.

The protein localises to the cytoplasm. The catalysed reaction is tRNA(Leu) + L-leucine + ATP = L-leucyl-tRNA(Leu) + AMP + diphosphate. The sequence is that of Leucine--tRNA ligase from Xanthomonas campestris pv. campestris (strain 8004).